Reading from the N-terminus, the 473-residue chain is Fumarate hydratase class II (473 aa).

Substrate is bound by residues 105-107 (SGT), 130-133 (HPND), 140-142 (SSN), and T188. H189 (proton donor/acceptor) is an active-site residue. The active site involves S319. Substrate is bound by residues S320 and 325-327 (KVN).

It belongs to the class-II fumarase/aspartase family. Fumarase subfamily. Homotetramer.

The protein localises to the cytoplasm. The catalysed reaction is (S)-malate = fumarate + H2O. It functions in the pathway carbohydrate metabolism; tricarboxylic acid cycle; (S)-malate from fumarate: step 1/1. In terms of biological role, involved in the TCA cycle. Catalyzes the stereospecific interconversion of fumarate to L-malate. This chain is Fumarate hydratase class II, found in Xylella fastidiosa (strain 9a5c).